The sequence spans 281 residues: Bifunctional protein FolD (281 aa).

Residues 164–166 (GAS), isoleucine 189, and isoleucine 230 contribute to the NADP(+) site.

This sequence belongs to the tetrahydrofolate dehydrogenase/cyclohydrolase family. Homodimer.

It carries out the reaction (6R)-5,10-methylene-5,6,7,8-tetrahydrofolate + NADP(+) = (6R)-5,10-methenyltetrahydrofolate + NADPH. The catalysed reaction is (6R)-5,10-methenyltetrahydrofolate + H2O = (6R)-10-formyltetrahydrofolate + H(+). It participates in one-carbon metabolism; tetrahydrofolate interconversion. Its function is as follows. Catalyzes the oxidation of 5,10-methylenetetrahydrofolate to 5,10-methenyltetrahydrofolate and then the hydrolysis of 5,10-methenyltetrahydrofolate to 10-formyltetrahydrofolate. The polypeptide is Bifunctional protein FolD (Sulfurovum sp. (strain NBC37-1)).